The primary structure comprises 833 residues: Protein translocase subunit SecA (833 aa).

Residues glutamine 87, 105-109, and aspartate 494 contribute to the ATP site; that span reads GEGKT. The segment at 789-816 is disordered; sequence PAAVAYSGGEAEAGPAQPHREDPKVGRN. Basic and acidic residues predominate over residues 806 to 815; sequence PHREDPKVGR. Residues cysteine 819, cysteine 821, cysteine 830, and cysteine 831 each coordinate Zn(2+).

This sequence belongs to the SecA family. Monomer and homodimer. Part of the essential Sec protein translocation apparatus which comprises SecA, SecYEG and auxiliary proteins SecDF-YajC and YidC. The cofactor is Zn(2+).

It localises to the cell inner membrane. Its subcellular location is the cytoplasm. The catalysed reaction is ATP + H2O + cellular proteinSide 1 = ADP + phosphate + cellular proteinSide 2.. In terms of biological role, part of the Sec protein translocase complex. Interacts with the SecYEG preprotein conducting channel. Has a central role in coupling the hydrolysis of ATP to the transfer of proteins into and across the cell membrane, serving as an ATP-driven molecular motor driving the stepwise translocation of polypeptide chains across the membrane. This chain is Protein translocase subunit SecA, found in Nitratidesulfovibrio vulgaris (strain ATCC 29579 / DSM 644 / CCUG 34227 / NCIMB 8303 / VKM B-1760 / Hildenborough) (Desulfovibrio vulgaris).